The following is a 276-amino-acid chain: ARL14 effector protein (276 aa).

The interval 158-177 is disordered; it reads KQTEFAPEGGKREKRKLTKA. Residue K176 forms a Glycyl lysine isopeptide (Lys-Gly) (interchain with G-Cter in SUMO2) linkage. S182 and S266 each carry phosphoserine.

As to quaternary structure, interacts with ARL14 and MYO1E.

It is found in the cytoplasm. In terms of biological role, through its interaction with ARL14 and MYO1E, may connect MHC class II-containing cytoplasmic vesicles to the actin network and hence controls the movement of these vesicles along the actin cytoskeleton in dendritic cells. In Mus musculus (Mouse), this protein is ARL14 effector protein (Arl14ep).